The primary structure comprises 406 residues: 3-phosphoshikimate 1-carboxyvinyltransferase (406 aa).

Residues Lys-20, Ser-21, and Arg-25 each contribute to the 3-phosphoshikimate site. Lys-20 contacts phosphoenolpyruvate. Phosphoenolpyruvate is bound by residues Gly-84 and Arg-112. 6 residues coordinate 3-phosphoshikimate: Ser-155, Ser-156, Gln-157, Asp-295, Gln-317, and Lys-321. Residue Gln-157 participates in phosphoenolpyruvate binding. Asp-295 functions as the Proton acceptor in the catalytic mechanism. Positions 325, 366, and 392 each coordinate phosphoenolpyruvate.

It belongs to the EPSP synthase family. Monomer.

The protein resides in the cytoplasm. It catalyses the reaction 3-phosphoshikimate + phosphoenolpyruvate = 5-O-(1-carboxyvinyl)-3-phosphoshikimate + phosphate. It functions in the pathway metabolic intermediate biosynthesis; chorismate biosynthesis. Its function is as follows. Catalyzes the transfer of the enolpyruvyl moiety of phosphoenolpyruvate (PEP) to the 5-hydroxyl of shikimate-3-phosphate (S3P) to produce enolpyruvyl shikimate-3-phosphate and inorganic phosphate. This Pyrococcus furiosus (strain ATCC 43587 / DSM 3638 / JCM 8422 / Vc1) protein is 3-phosphoshikimate 1-carboxyvinyltransferase.